Consider the following 625-residue polypeptide: Glutamyl-tRNA(Gln) amidotransferase subunit E (625 aa).

The protein belongs to the GatB/GatE family. GatE subfamily. Heterodimer of GatD and GatE.

It carries out the reaction L-glutamyl-tRNA(Gln) + L-glutamine + ATP + H2O = L-glutaminyl-tRNA(Gln) + L-glutamate + ADP + phosphate + H(+). Functionally, allows the formation of correctly charged Gln-tRNA(Gln) through the transamidation of misacylated Glu-tRNA(Gln) in organisms which lack glutaminyl-tRNA synthetase. The reaction takes place in the presence of glutamine and ATP through an activated gamma-phospho-Glu-tRNA(Gln). The GatDE system is specific for glutamate and does not act on aspartate. The chain is Glutamyl-tRNA(Gln) amidotransferase subunit E from Caldivirga maquilingensis (strain ATCC 700844 / DSM 13496 / JCM 10307 / IC-167).